The following is a 116-amino-acid chain: Ribonuclease P protein component (116 aa).

The protein belongs to the RnpA family. As to quaternary structure, consists of a catalytic RNA component (M1 or rnpB) and a protein subunit.

The enzyme catalyses Endonucleolytic cleavage of RNA, removing 5'-extranucleotides from tRNA precursor.. Its function is as follows. RNaseP catalyzes the removal of the 5'-leader sequence from pre-tRNA to produce the mature 5'-terminus. It can also cleave other RNA substrates such as 4.5S RNA. The protein component plays an auxiliary but essential role in vivo by binding to the 5'-leader sequence and broadening the substrate specificity of the ribozyme. The protein is Ribonuclease P protein component of Bacillus velezensis (strain DSM 23117 / BGSC 10A6 / LMG 26770 / FZB42) (Bacillus amyloliquefaciens subsp. plantarum).